Consider the following 217-residue polypeptide: Probable coenzyme A transferase subunit beta (217 aa).

The active site involves Glu-50.

This sequence belongs to the 3-oxoacid CoA-transferase subunit B family. Heterodimer of a subunit alpha and a subunit beta.

In Bacillus subtilis (strain 168), this protein is Probable coenzyme A transferase subunit beta (yodR).